The following is a 127-amino-acid chain: ATP synthase epsilon chain (127 aa).

The protein belongs to the ATPase epsilon chain family. F-type ATPases have 2 components, CF(1) - the catalytic core - and CF(0) - the membrane proton channel. CF(1) has five subunits: alpha(3), beta(3), gamma(1), delta(1), epsilon(1). CF(0) has three main subunits: a, b and c.

Its subcellular location is the cell inner membrane. Its function is as follows. Produces ATP from ADP in the presence of a proton gradient across the membrane. The protein is ATP synthase epsilon chain of Leptospira interrogans serogroup Icterohaemorrhagiae serovar copenhageni (strain Fiocruz L1-130).